Consider the following 284-residue polypeptide: 4-diphosphocytidyl-2-C-methyl-D-erythritol kinase (284 aa).

K9 is a catalytic residue. ATP is bound at residue 92-102 (PMGGGIGGGSS). D134 is an active-site residue.

The protein belongs to the GHMP kinase family. IspE subfamily.

It carries out the reaction 4-CDP-2-C-methyl-D-erythritol + ATP = 4-CDP-2-C-methyl-D-erythritol 2-phosphate + ADP + H(+). The protein operates within isoprenoid biosynthesis; isopentenyl diphosphate biosynthesis via DXP pathway; isopentenyl diphosphate from 1-deoxy-D-xylulose 5-phosphate: step 3/6. In terms of biological role, catalyzes the phosphorylation of the position 2 hydroxy group of 4-diphosphocytidyl-2C-methyl-D-erythritol. In Stutzerimonas stutzeri (strain A1501) (Pseudomonas stutzeri), this protein is 4-diphosphocytidyl-2-C-methyl-D-erythritol kinase.